A 412-amino-acid chain; its full sequence is Adenosine receptor A2a (412 aa).

Over 1-7 (MPTVGSL) the chain is Extracellular. Residues 8 to 32 (VYIMVELAIALLAILGNMLVCWAVW) traverse the membrane as a helical segment. Residues 33-42 (LNSNLQNVTN) are Cytoplasmic-facing. The chain crosses the membrane as a helical span at residues 43–66 (YFVVSLAAADIAVGVLAIPFAITI). Residues 67-77 (STGFCAACHGC) lie on the Extracellular side of the membrane. Intrachain disulfides connect Cys-71–Cys-159, Cys-74–Cys-146, and Cys-77–Cys-166. Residues 78–100 (LFIACFVLVLTQSSIFSLLAIAI) form a helical membrane-spanning segment. Topologically, residues 101 to 120 (DRYIAIRIPLRYNGLVTGTR) are cytoplasmic. Residues 121 to 143 (AKGVIAVCWVLSFAIGLTPMLGW) form a helical membrane-spanning segment. Over 144-173 (NNCHHWGEGENQSQGCGEGQVACLFEDVVP) the chain is Extracellular. An N-linked (GlcNAc...) asparagine glycan is attached at Asn-154. Position 169 (Glu-169) interacts with adenosine. The chain crosses the membrane as a helical span at residues 174–198 (MNYMVYYNFFACVLVPLLLMLGVYL). Residues 199–234 (RIFLAARRQLKQMETQPLPGERARSTLQKEVHAAKS) are Cytoplasmic-facing. The helical transmembrane segment at 235-258 (LAIIVGLFALCWLPLHIINCFTFF) threads the bilayer. Residue Asn-253 coordinates adenosine. A disulfide bridge connects residues Cys-259 and Cys-262. At 259-266 (CPECPHAP) the chain is on the extracellular side. Residues 267–290 (LWLMYPAIILSHFNSVVNPFIYAY) form a helical membrane-spanning segment. Adenosine contacts are provided by Ser-277 and His-278. Over 291–412 (RIREFRHTFH…PLAQDGAGVS (122 aa)) the chain is Cytoplasmic. The segment at 368-412 (RASARESPGDTGLPDVELLSHELHGASPESPGLEGPLAQDGAGVS) is disordered.

Belongs to the G-protein coupled receptor 1 family. Interacts (via cytoplasmic C-terminal domain) with USP4; the interaction is direct. May interact with DRD4. Interacts with NECAB2. Interacts (via cytoplasmic C-terminal domain) with GAS2L2; interaction enhances receptor-mediated adenylyl cyclase activity. In terms of processing, ubiquitinated. Deubiquitinated by USP4; leading to stabilization and expression at the cell surface.

The protein localises to the cell membrane. Its function is as follows. Receptor for adenosine. The activity of this receptor is mediated by G proteins which activate adenylyl cyclase. The polypeptide is Adenosine receptor A2a (ADORA2A) (Equus caballus (Horse)).